A 91-amino-acid polypeptide reads, in one-letter code: CRISPR-associated endoribonuclease Cas2 2 (91 aa).

Aspartate 6 lines the Mg(2+) pocket.

This sequence belongs to the CRISPR-associated endoribonuclease Cas2 protein family. Homodimer, forms a heterotetramer with a Cas1 homodimer. Mg(2+) serves as cofactor.

Its function is as follows. CRISPR (clustered regularly interspaced short palindromic repeat), is an adaptive immune system that provides protection against mobile genetic elements (viruses, transposable elements and conjugative plasmids). CRISPR clusters contain sequences complementary to antecedent mobile elements and target invading nucleic acids. CRISPR clusters are transcribed and processed into CRISPR RNA (crRNA). Functions as a ssRNA-specific endoribonuclease. Involved in the integration of spacer DNA into the CRISPR cassette. The polypeptide is CRISPR-associated endoribonuclease Cas2 2 (Moorella thermoacetica (strain ATCC 39073 / JCM 9320)).